Here is a 95-residue protein sequence, read N- to C-terminus: Aspartyl/glutamyl-tRNA(Asn/Gln) amidotransferase subunit C (95 aa).

The protein belongs to the GatC family. Heterotrimer of A, B and C subunits.

The catalysed reaction is L-glutamyl-tRNA(Gln) + L-glutamine + ATP + H2O = L-glutaminyl-tRNA(Gln) + L-glutamate + ADP + phosphate + H(+). It catalyses the reaction L-aspartyl-tRNA(Asn) + L-glutamine + ATP + H2O = L-asparaginyl-tRNA(Asn) + L-glutamate + ADP + phosphate + 2 H(+). Its function is as follows. Allows the formation of correctly charged Asn-tRNA(Asn) or Gln-tRNA(Gln) through the transamidation of misacylated Asp-tRNA(Asn) or Glu-tRNA(Gln) in organisms which lack either or both of asparaginyl-tRNA or glutaminyl-tRNA synthetases. The reaction takes place in the presence of glutamine and ATP through an activated phospho-Asp-tRNA(Asn) or phospho-Glu-tRNA(Gln). The protein is Aspartyl/glutamyl-tRNA(Asn/Gln) amidotransferase subunit C of Cytophaga hutchinsonii (strain ATCC 33406 / DSM 1761 / CIP 103989 / NBRC 15051 / NCIMB 9469 / D465).